We begin with the raw amino-acid sequence, 207 residues long: MKMFIVLVLSAAFALPAAFATEQDVITLQAYEELLKNGAANGMTKTVISSPVLEEALVSYSKNKLGGLPVCGETCVGGTCNTPGCSCSWPVCTRNSLESTKSANPLLEEALTAFAKKGLGGLPVCGETCVGGTCNTPGCTCSWPVCTRNALETQKPNHLLEEALVAFAKKGNLGGLPVCGETCVGGTCNTPGCSCSWPVCTRNALAM.

Positions 1–20 are cleaved as a signal peptide; it reads MKMFIVLVLSAAFALPAAFA. Positions 21–66 are excised as a propeptide; the sequence is TEQDVITLQAYEELLKNGAANGMTKTVISSPVLEEALVSYSKNKLG. The cyclopeptide (Gly-Asn) cross-link spans 67-95; it reads GLPVCGETCVGGTCNTPGCSCSWPVCTRN. Cystine bridges form between cysteine 71–cysteine 85, cysteine 75–cysteine 87, and cysteine 80–cysteine 92. Residues 96 to 120 constitute a propeptide that is removed on maturation; that stretch reads SLESTKSANPLLEEALTAFAKKGLG. Residues 121–149 constitute a cross-link (cyclopeptide (Gly-Asn)); that stretch reads GLPVCGETCVGGTCNTPGCTCSWPVCTRN. Cystine bridges form between cysteine 125–cysteine 139, cysteine 129–cysteine 141, and cysteine 134–cysteine 146. Residues 150–174 constitute a propeptide that is removed on maturation; that stretch reads ALETQKPNHLLEEALVAFAKKGNLG. A cross-link (cyclopeptide (Gly-Asn)) is located at residues 175-203; it reads GLPVCGETCVGGTCNTPGCSCSWPVCTRN. Disulfide bonds link cysteine 179-cysteine 193, cysteine 183-cysteine 195, and cysteine 188-cysteine 200. Residues 204-207 constitute a propeptide that is removed on maturation; that stretch reads ALAM.

The protein belongs to the cyclotide family. Moebius subfamily. Post-translationally, varv peptide A and kalata-B1 are cyclic peptides.

Its function is as follows. Probably participates in a plant defense mechanism. Has hemolytic activity. This Viola odorata (Sweet violet) protein is Varv peptide A/Kalata-B1.